The primary structure comprises 144 residues: Large ribosomal subunit protein uL15 (144 aa).

Over residues 1–14 (MVVRREKKSRKMRG) the composition is skewed to basic residues. Residues 1-35 (MVVRREKKSRKMRGSRTMGWGIRGQHRDRGSQGGR) are disordered.

Belongs to the universal ribosomal protein uL15 family. Part of the 50S ribosomal subunit.

Binds to the 23S rRNA. The chain is Large ribosomal subunit protein uL15 from Saccharolobus solfataricus (strain ATCC 35092 / DSM 1617 / JCM 11322 / P2) (Sulfolobus solfataricus).